A 97-amino-acid polypeptide reads, in one-letter code: U6-theraphotoxin-Hhn1a 4 (97 aa).

An N-terminal signal peptide occupies residues 1 to 33; it reads MLIKQFSRRSKNMKVQILLAFAALFVLAVGSYA. A propeptide spanning residues 34 to 61 is cleaved from the precursor; it reads SESKKLDLRDALLSAMFSADYQLNPQER. 3 disulfide bridges follow: cysteine 63/cysteine 77, cysteine 70/cysteine 82, and cysteine 76/cysteine 89.

The protein belongs to the neurotoxin 10 (Hwtx-1) family. 12 (Hntx-12) subfamily. Expressed by the venom gland.

It is found in the secreted. Functionally, ion channel inhibitor. This is U6-theraphotoxin-Hhn1a 4 from Cyriopagopus hainanus (Chinese bird spider).